Reading from the N-terminus, the 491-residue chain is 23S rRNA (uracil(1939)-C(5))-methyltransferase RlmD (491 aa).

Residues 1–10 (MSDPTEHPEI) show a composition bias toward basic and acidic residues. Residues 1–28 (MSDPTEHPEILQDPSSSAPVQGRTDLPP) form a disordered region. A TRAM domain is found at 18–81 (APVQGRTDLP…NNWEQASLTA (64 aa)). Residues C94, C104, C107, and C186 each coordinate [4Fe-4S] cluster. Q294, F323, N328, E344, N379, and D400 together coordinate S-adenosyl-L-methionine. The active-site Nucleophile is C447.

Belongs to the class I-like SAM-binding methyltransferase superfamily. RNA M5U methyltransferase family. RlmD subfamily.

The enzyme catalyses uridine(1939) in 23S rRNA + S-adenosyl-L-methionine = 5-methyluridine(1939) in 23S rRNA + S-adenosyl-L-homocysteine + H(+). Its function is as follows. Catalyzes the formation of 5-methyl-uridine at position 1939 (m5U1939) in 23S rRNA. This chain is 23S rRNA (uracil(1939)-C(5))-methyltransferase RlmD, found in Paracidovorax citrulli (strain AAC00-1) (Acidovorax citrulli).